The sequence spans 143 residues: Acyl carrier protein 3, chloroplastic (143 aa).

The transit peptide at 1–60 directs the protein to the chloroplast; it reads MATAAAGSSLICIKSASCSLNRAQVPSGLSSLRSVSLPISGKIFPSLRSSRGPLSFRVCC. Positions 64 to 139 constitute a Carrier domain; sequence QETVTRVCEI…DAADLIEKLV (76 aa). Serine 99 bears the O-(pantetheine 4'-phosphoryl)serine mark.

This sequence belongs to the acyl carrier protein (ACP) family. In terms of processing, 4'-phosphopantetheine is transferred from CoA to a specific serine of apo-ACP by acpS. This modification is essential for activity because fatty acids are bound in thioester linkage to the sulfhydryl of the prosthetic group.

The protein localises to the plastid. Its subcellular location is the chloroplast. It functions in the pathway lipid metabolism; fatty acid biosynthesis. Functionally, carrier of the growing fatty acid chain in fatty acid biosynthesis. This chain is Acyl carrier protein 3, chloroplastic (ACL1.3), found in Cuphea lanceolata (Cigar flower).